We begin with the raw amino-acid sequence, 209 residues long: LexA repressor (209 aa).

Residues 29-49 (VREIGSAIGLSSTSTVHGHID) constitute a DNA-binding region (H-T-H motif). Catalysis depends on for autocatalytic cleavage activity residues S130 and K168.

The protein belongs to the peptidase S24 family. As to quaternary structure, homodimer.

It catalyses the reaction Hydrolysis of Ala-|-Gly bond in repressor LexA.. In terms of biological role, represses a number of genes involved in the response to DNA damage (SOS response), including recA and lexA. In the presence of single-stranded DNA, RecA interacts with LexA causing an autocatalytic cleavage which disrupts the DNA-binding part of LexA, leading to derepression of the SOS regulon and eventually DNA repair. The polypeptide is LexA repressor (Pediococcus pentosaceus (strain ATCC 25745 / CCUG 21536 / LMG 10740 / 183-1w)).